Consider the following 172-residue polypeptide: Oleosin 18 kDa (172 aa).

N-acetylalanine is present on A2. The tract at residues 2–38 is polar; the sequence is ADRDRAGQYYQQQRGQVGETVKGILPEKAPSASQALT. Residues 39–110 are hydrophobic; it reads VATLFPLGGL…GGLSSLTFLA (72 aa). A run of 3 helical transmembrane segments spans residues 42–62, 70–90, and 91–111; these read LFPLGGLLLVLSGLALAASVV, VFLIFSPVLVPAALLIGLAVA, and GFLTSGALGLGGLSSLTFLAN. Residues 147–172 form a disordered region; it reads HAIQGRADQAGTGAGAGGGAGTKTSS. Gly residues predominate over residues 158–172; the sequence is TGAGAGGGAGTKTSS.

It belongs to the oleosin family.

Its subcellular location is the lipid droplet. The protein resides in the membrane. May have a structural role to stabilize the lipid body during desiccation of the seed by preventing coalescence of the oil. Probably interacts with both lipid and phospholipid moieties of lipid bodies. May also provide recognition signals for specific lipase anchorage in lipolysis during seedling growth. The chain is Oleosin 18 kDa (OLE18) from Oryza sativa subsp. indica (Rice).